The chain runs to 432 residues: Adenylosuccinate synthetase (432 aa).

GTP contacts are provided by residues 13–19 and 41–43; these read GDEGKGK and GHT. Asp14 acts as the Proton acceptor in catalysis. Mg(2+) contacts are provided by Asp14 and Gly41. IMP is bound by residues 14–17, 39–42, Thr130, Arg144, Gln225, Thr240, and Arg304; these read DEGK and NAGH. His42 (proton donor) is an active-site residue. 300–306 contacts substrate; it reads ATTGRRR. GTP is bound by residues Arg306, 332–334, and 415–417; these read KLD and STG.

The protein belongs to the adenylosuccinate synthetase family. As to quaternary structure, homodimer. Mg(2+) serves as cofactor.

It localises to the cytoplasm. The enzyme catalyses IMP + L-aspartate + GTP = N(6)-(1,2-dicarboxyethyl)-AMP + GDP + phosphate + 2 H(+). It functions in the pathway purine metabolism; AMP biosynthesis via de novo pathway; AMP from IMP: step 1/2. Its function is as follows. Plays an important role in the de novo pathway of purine nucleotide biosynthesis. Catalyzes the first committed step in the biosynthesis of AMP from IMP. The polypeptide is Adenylosuccinate synthetase (Salmonella heidelberg (strain SL476)).